Consider the following 506-residue polypeptide: Subtilisin-like serine protease Cur l 4.0101 (506 aa).

The signal sequence occupies residues 1–15 (MKYSLIAALPALAAA). A propeptide spans 16-135 (SPTFSTETIH…IERDSEVRIL (120 aa)) (removed in mature form). The Inhibitor I9 domain occupies 43-134 (SYMVVFKKHV…YIERDSEVRI (92 aa)). The disordered stretch occupies residues 59–79 (HDWVQSVHSKNTQERMELRKR). Over residues 69 to 79 (NTQERMELRKR) the composition is skewed to basic and acidic residues. In terms of domain architecture, Peptidase S8 spans 147–453 (PWGLARISHR…GGSSNYTDII (307 aa)). Catalysis depends on charge relay system residues Asp183 and His215. N-linked (GlcNAc...) asparagine glycosylation is found at Asn245 and Asn285. Residue Ser381 is the Charge relay system of the active site. Residue Asn448 is glycosylated (N-linked (GlcNAc...) asparagine). Residues 459–506 (TVKKAASKEEEKESEFRITIPSLSELEDDFEKAKESAGRKAHHVGGKL) constitute a propeptide, removed in mature form.

The protein belongs to the peptidase S8 family.

Functionally, serine protease. The polypeptide is Subtilisin-like serine protease Cur l 4.0101 (Cochliobolus lunatus (Filamentous fungus)).